Consider the following 733-residue polypeptide: SWR1-complex protein 4 (733 aa).

2 disordered regions span residues Met-1–Leu-34 and Pro-98–Phe-128. The SANT domain occupies Asn-146 to Ala-217. Positions Lys-247–Asp-299 form a coiled coil. Positions Ala-371–Ala-384 are enriched in low complexity. 2 disordered regions span residues Ala-371–Pro-488 and Lys-564–Lys-733. 4 stretches are compositionally biased toward basic and acidic residues: residues Asn-387 to Gly-423, Pro-463 to Leu-484, Lys-564 to Glu-589, and Asp-610 to Glu-653. A compositionally biased stretch (low complexity) spans Gly-699–Ala-710.

The protein belongs to the SWC4 family. As to quaternary structure, component of the SWR1 chromatin-remodeling complex and of the NuA4 histone acetyltransferase complex.

It localises to the nucleus. Its function is as follows. Component of the SWR1 complex which mediates the ATP-dependent exchange of histone H2A for the H2A variant H2A.Z leading to transcriptional regulation of selected genes by chromatin remodeling. Component of the NuA4 histone acetyltransferase complex which is involved in transcriptional activation of selected genes principally by acetylation of nucleosomal histone H4 and H2A. The NuA4 complex is also involved in DNA repair. This Neurospora crassa (strain ATCC 24698 / 74-OR23-1A / CBS 708.71 / DSM 1257 / FGSC 987) protein is SWR1-complex protein 4 (crc-1).